A 319-amino-acid polypeptide reads, in one-letter code: MTVIDNHEALAKEGDNGLSEAGARDYFELLKPRVMSLVVFTAFAGLVLAPGHINPVLGLIAILCIAVGAGASGALNMWYDADIDAIMTRTAKRPIPAGRVAPSEALAFGLVLSGFSVTILGLAVNWLSAAILAFTIFFYAVVYTMWLKRSTPQNIVIGGAAGAFPPVIGWACVTGNVTIESVVLFLIIFLWTPAHFWALALFKMGDYEAVGVPMLPNVAGVPTTKNQIVAYAVLTAIIGVVPSFMGFASLGYGVVATVLGVIFVHCSISVWRMPDGDVKMVPAKKLFAFSIFYLFAIFSALLIDRLVAVLMSGGVGGWL.

Helical transmembrane passes span 34–54 (VMSL…GHIN), 55–75 (PVLG…SGAL), 95–115 (IPAG…LSGF), 119–139 (ILGL…IFFY), 155–175 (IVIG…CVTG), 182–202 (VVLF…LALF), 221–241 (VPTT…IGVV), 244–264 (FMGF…VIFV), and 291–311 (IFYL…AVLM).

It belongs to the UbiA prenyltransferase family. Protoheme IX farnesyltransferase subfamily.

It localises to the cell inner membrane. It carries out the reaction heme b + (2E,6E)-farnesyl diphosphate + H2O = Fe(II)-heme o + diphosphate. It participates in porphyrin-containing compound metabolism; heme O biosynthesis; heme O from protoheme: step 1/1. Its function is as follows. Converts heme B (protoheme IX) to heme O by substitution of the vinyl group on carbon 2 of heme B porphyrin ring with a hydroxyethyl farnesyl side group. The protein is Protoheme IX farnesyltransferase of Rhizobium rhizogenes (strain K84 / ATCC BAA-868) (Agrobacterium radiobacter).